Reading from the N-terminus, the 182-residue chain is UPF0200 protein Mthe_1012 (182 aa).

Position 8–15 (8–15) interacts with ATP; that stretch reads GMPGSGKS.

This sequence belongs to the UPF0200 family.

The polypeptide is UPF0200 protein Mthe_1012 (Methanothrix thermoacetophila (strain DSM 6194 / JCM 14653 / NBRC 101360 / PT) (Methanosaeta thermophila)).